The sequence spans 355 residues: F-box only protein 32 (355 aa).

Positions 62-67 match the Nuclear localization signal motif; that stretch reads KKRKKD. Residues 169-173 carry the Nuclear export signal motif; it reads LLQTL. In terms of domain architecture, F-box spans 223 to 271; the sequence is LTITDLPVCLQLNIMQRLSDGRDLVSLGQAAPDLHVLSEDRLLWKRLCQ. Residues 280–295 carry the Bipartite nuclear localization signal motif; sequence RKRLILSDKGQLDWKK.

Part of the SCF (SKP1-CUL1-F-box) E3 ubiquitin-protein ligase complex SCF(FBXO32) formed of CUL1, SKP1, RBX1 and FBXO32. As to expression, specifically expressed in cardiac and skeletal muscle.

Its subcellular location is the cytoplasm. The protein localises to the nucleus. The protein operates within protein modification; protein ubiquitination. Functionally, substrate recognition component of a SCF (SKP1-CUL1-F-box protein) E3 ubiquitin-protein ligase complex which mediates the ubiquitination and subsequent proteasomal degradation of target proteins. Probably recognizes and binds to phosphorylated target proteins during skeletal muscle atrophy. Recognizes TERF1. This chain is F-box only protein 32 (Fbxo32), found in Mus musculus (Mouse).